The following is a 669-amino-acid chain: Glycine--tRNA ligase beta subunit (669 aa).

The protein belongs to the class-II aminoacyl-tRNA synthetase family. Tetramer of two alpha and two beta subunits.

The protein resides in the cytoplasm. The catalysed reaction is tRNA(Gly) + glycine + ATP = glycyl-tRNA(Gly) + AMP + diphosphate. The polypeptide is Glycine--tRNA ligase beta subunit (Phenylobacterium zucineum (strain HLK1)).